The sequence spans 838 residues: Probable beta-glucosidase I (838 aa).

2 N-linked (GlcNAc...) asparagine glycosylation sites follow: N57 and N197. D225 is a catalytic residue. The PA14 domain occupies 395–555 (EGEKGFKFRV…GQEELISKAA (161 aa)). N493 carries an N-linked (GlcNAc...) asparagine glycan.

It belongs to the glycosyl hydrolase 3 family.

The protein resides in the secreted. The catalysed reaction is Hydrolysis of terminal, non-reducing beta-D-glucosyl residues with release of beta-D-glucose.. It functions in the pathway glycan metabolism; cellulose degradation. Functionally, beta-glucosidases are one of a number of cellulolytic enzymes involved in the degradation of cellulosic biomass. Catalyzes the last step releasing glucose from the inhibitory cellobiose. This chain is Probable beta-glucosidase I (bglI), found in Aspergillus clavatus (strain ATCC 1007 / CBS 513.65 / DSM 816 / NCTC 3887 / NRRL 1 / QM 1276 / 107).